Reading from the N-terminus, the 520-residue chain is 2-isopropylmalate synthase (520 aa).

Residues 5–267 (VIIFDTTLRD…HTNINHQEIY (263 aa)) enclose the Pyruvate carboxyltransferase domain. Asp14, His202, His204, and Asn238 together coordinate Mn(2+). The regulatory domain stretch occupies residues 392-520 (RLDYFSVQSG…RLQQNNQEMV (129 aa)).

This sequence belongs to the alpha-IPM synthase/homocitrate synthase family. LeuA type 1 subfamily. Homodimer. The cofactor is Mn(2+).

The protein localises to the cytoplasm. It catalyses the reaction 3-methyl-2-oxobutanoate + acetyl-CoA + H2O = (2S)-2-isopropylmalate + CoA + H(+). It functions in the pathway amino-acid biosynthesis; L-leucine biosynthesis; L-leucine from 3-methyl-2-oxobutanoate: step 1/4. Catalyzes the condensation of the acetyl group of acetyl-CoA with 3-methyl-2-oxobutanoate (2-ketoisovalerate) to form 3-carboxy-3-hydroxy-4-methylpentanoate (2-isopropylmalate). The chain is 2-isopropylmalate synthase from Yersinia pseudotuberculosis serotype O:1b (strain IP 31758).